We begin with the raw amino-acid sequence, 101 residues long: Cilia- and flagella-associated protein 141 (101 aa).

In terms of assembly, microtubule inner protein component of sperm flagellar doublet microtubules.

Its subcellular location is the cytoplasm. The protein localises to the cytoskeleton. The protein resides in the cilium axoneme. It localises to the flagellum axoneme. In terms of biological role, microtubule inner protein (MIP) part of the dynein-decorated doublet microtubules (DMTs) in cilia axoneme, which is required for motile cilia beating. The polypeptide is Cilia- and flagella-associated protein 141 (Mus musculus (Mouse)).